The primary structure comprises 463 residues: Hexose-6-phosphate:phosphate antiporter (463 aa).

Topologically, residues 1-24 (MLAFLNQVRKPTLDLPLEVRRKMW) are cytoplasmic. A helical membrane pass occupies residues 25–45 (FKPFMQSYLVVFIGYLTMYLI). At 46–60 (RKNFNIAQNDMISTY) the chain is on the periplasmic side. Residues 61–81 (GLSMTQLGMIGLGFSITYGVG) form a helical membrane-spanning segment. The Cytoplasmic portion of the chain corresponds to 82–96 (KTLVSYYADGKNTKQ). A helical transmembrane segment spans residues 97-117 (FLPFMLILSAICMLGFSASMG). The Periplasmic segment spans residues 118 to 120 (SGS). A helical transmembrane segment spans residues 121-141 (VSLFLMIAFYALSGFFQSTGG). Residues 142 to 159 (SCSYSTITKWTPRRKRGT) lie on the Cytoplasmic side of the membrane. The helical transmembrane segment at 160–180 (FLGFWNISHNLGGAGAAGVAL) threads the bilayer. Over 181–189 (FGANYLFDG) the chain is Periplasmic. A helical transmembrane segment spans residues 190–210 (HVIGMFIFPSIIALIVGFIGL). The Cytoplasmic segment spans residues 211 to 259 (RYGSDSPESYGLGKAEELFGEEISEEDKETESTDMTKWQIFVEYVLKNK). A helical membrane pass occupies residues 260–280 (VIWLLCFANIFLYVVRIGIDQ). Over 281 to 297 (WSTVYAFQELKLSKAVA) the chain is Periplasmic. The chain crosses the membrane as a helical span at residues 298-318 (IQGFTLFEAGALVGTLLWGWL). The Cytoplasmic portion of the chain corresponds to 319–326 (SDLANGRR). A helical membrane pass occupies residues 327 to 347 (GLVACIALALIIATLGVYQHA). The Periplasmic portion of the chain corresponds to 348–357 (SNEYIYLASL). The helical transmembrane segment at 358 to 378 (FALGFLVFGPQLLIGVAAVGF) threads the bilayer. At 379-382 (VPKK) the chain is on the cytoplasmic side. The helical transmembrane segment at 383–403 (AIGAADGIKGTFAYLIGDSFA) threads the bilayer. At 404–425 (KLGLGMIADGTPVFGLTGWAGT) the chain is on the periplasmic side. The helical transmembrane segment at 426–446 (FAALDIAAIGCICLMAIVAVM) threads the bilayer. At 447-463 (EERKIRREKKIQQLTVA) the chain is on the cytoplasmic side.

This sequence belongs to the major facilitator superfamily. Organophosphate:Pi antiporter (OPA) (TC 2.A.1.4) family.

The protein localises to the cell inner membrane. In terms of biological role, mediates the exchange of external hexose 6-phosphate and internal inorganic phosphate. This is Hexose-6-phosphate:phosphate antiporter (uhpT) from Escherichia coli O157:H7.